The chain runs to 302 residues: tRNA-cytidine(32) 2-sulfurtransferase (302 aa).

Residues Ser-43–Ser-48 carry the PP-loop motif motif. Residues Cys-118, Cys-121, and Cys-209 each contribute to the [4Fe-4S] cluster site.

Belongs to the TtcA family. Homodimer. It depends on Mg(2+) as a cofactor. The cofactor is [4Fe-4S] cluster.

The protein resides in the cytoplasm. It carries out the reaction cytidine(32) in tRNA + S-sulfanyl-L-cysteinyl-[cysteine desulfurase] + AH2 + ATP = 2-thiocytidine(32) in tRNA + L-cysteinyl-[cysteine desulfurase] + A + AMP + diphosphate + H(+). The protein operates within tRNA modification. In terms of biological role, catalyzes the ATP-dependent 2-thiolation of cytidine in position 32 of tRNA, to form 2-thiocytidine (s(2)C32). The sulfur atoms are provided by the cysteine/cysteine desulfurase (IscS) system. In Polynucleobacter asymbioticus (strain DSM 18221 / CIP 109841 / QLW-P1DMWA-1) (Polynucleobacter necessarius subsp. asymbioticus), this protein is tRNA-cytidine(32) 2-sulfurtransferase.